The chain runs to 39 residues: Contryphan-Cal2 (39 aa).

An N-terminal signal peptide occupies residues 1–20; the sequence is MTRTAVLLLTLLFLVAMAAS. C29 and C35 are oxidised to a cystine.

As to expression, expressed by the venom duct.

The protein resides in the secreted. Functionally, probable neurotoxin. The polypeptide is Contryphan-Cal2 (Californiconus californicus (California cone)).